The following is a 1208-amino-acid chain: Urease accessory protein 2 (1208 aa).

2 coiled-coil regions span residues 187 to 362 and 400 to 469; these read RDKI…EKAA and IKAL…MHEQ. Residues 523–633 enclose the SMC hinge domain; sequence DGVFGPLYDL…ICEDLQTAAH (111 aa). Coiled coils occupy residues 688-771 and 817-903; these read HIEV…YEEE and NRLE…VQTQ. The tract at residues 748 to 773 is disordered; the sequence is ESSLEEAEGASRDAKAKRASYEEELR. Over residues 756–773 the composition is skewed to basic and acidic residues; it reads GASRDAKAKRASYEEELR.

This sequence belongs to the SMC family. SMC3 subfamily. As to quaternary structure, component of cohesin complexes.

Its subcellular location is the nucleus. Central component of cohesin, a complex required for chromosome cohesion during the cell cycle. The cohesin complex may form a large proteinaceous ring within which sister chromatids can be trapped. At anaphase, the complex is cleaved and dissociates from chromatin, allowing sister chromatids to segregate. Cohesion is coupled to DNA replication and is involved in DNA repair. The cohesin complex also plays an important role in spindle pole assembly during mitosis and in chromosomes movement. Is unrelated to urease function in C.neoformans. This is Urease accessory protein 2 from Cryptococcus neoformans var. grubii serotype A (strain H99 / ATCC 208821 / CBS 10515 / FGSC 9487) (Filobasidiella neoformans var. grubii).